Reading from the N-terminus, the 261-residue chain is Lys-63-specific deubiquitinase BRCC36 (261 aa).

The MPN domain occupies 6–149; it reads VHIQGDAFLV…YTCFQSVQAQ (144 aa). The Zn(2+) site is built by His-92, His-94, and Asp-105. Positions 92–105 match the JAMM motif motif; sequence HSHPHITVWPSHVD.

This sequence belongs to the peptidase M67A family. BRCC36 subfamily. Component of the BRCA1-A complex, at least composed of brca1, bard1, uimc1/rap80, abraxas1, brcc3/brcc36, babam2 and babam1/nba1. In the BRCA1-A complex, interacts directly with ABRAXAS1 and babam2. Component of the BRISC complex, at least composed of ABRAXAS2, brcc3/brcc36, babam2 and babam1/nba1. Within the complex, interacts directly with abraxas2. Both the BRCA1-A complex and the BRISC complex bind polyubiquitin. Zn(2+) is required as a cofactor.

The protein localises to the nucleus. It is found in the cytoplasm. Its subcellular location is the cytoskeleton. The protein resides in the spindle pole. Its function is as follows. Metalloprotease that specifically cleaves 'Lys-63'-linked polyubiquitin chains. Does not have activity toward 'Lys-48'-linked polyubiquitin chains. Component of the BRCA1-A complex, a complex that specifically recognizes 'Lys-63'-linked ubiquitinated histones H2A and H2AX at DNA lesions sites, leading to target the brca1-bard1 heterodimer to sites of DNA damage at double-strand breaks (DSBs). In the BRCA1-A complex, it specifically removes 'Lys-63'-linked ubiquitin on histones H2A and H2AX, antagonizing the rnf8-dependent ubiquitination at double-strand breaks (DSBs). Catalytic subunit of the BRISC complex, a multiprotein complex that specifically cleaves 'Lys-63'-linked ubiquitin in various substrates. Mediates the specific 'Lys-63'-specific deubiquitination associated with the COP9 signalosome complex (CSN), via the interaction of the BRISC complex with the CSN complex. The BRISC complex is required for normal mitotic spindle assembly and microtubule attachment to kinetochores via its role in deubiquitinating numa1. Plays a role in interferon signaling via its role in the deubiquitination of the interferon receptor ifnar1; deubiquitination increases ifnar1 activity by enhancing its stability and cell surface expression. Acts as a regulator of the NLRP3 inflammasome by mediating deubiquitination of nlrp3. Down-regulates the response to bacterial lipopolysaccharide (LPS) via its role in ifnar1 deubiquitination. In Xenopus laevis (African clawed frog), this protein is Lys-63-specific deubiquitinase BRCC36 (brcc3).